The primary structure comprises 83 residues: MPNIKSAIKRVNTTHTAEERNISQKNEMRTAVKRAHSALESNADNKADLLSFALKKVDKAAQRNLIHDNKAARIKSSLMTAAK.

A disordered region spans residues 1–25; sequence MPNIKSAIKRVNTTHTAEERNISQK. Residues 16-25 are compositionally biased toward basic and acidic residues; that stretch reads TAEERNISQK.

It belongs to the bacterial ribosomal protein bS20 family.

Binds directly to 16S ribosomal RNA. The protein is Small ribosomal subunit protein bS20 of Staphylococcus saprophyticus subsp. saprophyticus (strain ATCC 15305 / DSM 20229 / NCIMB 8711 / NCTC 7292 / S-41).